The chain runs to 183 residues: Intermembrane phospholipid transport system binding protein MlaD (183 aa).

The Cytoplasmic portion of the chain corresponds to 1–7 (MQTKKNE). The helical; Signal-anchor for type II membrane protein transmembrane segment at 8–28 (IWVGIFLLAALLAALFVCLKA) threads the bilayer. The Periplasmic segment spans residues 29–183 (ANVTSIRTEP…ETTEPVGTTK (155 aa)). The segment at 39–116 (TYTLYATFDN…LGEQYLALNV (78 aa)) is MCE/MlaD. Residues 155–183 (KGDDNKNSGDAPAAAPGNNETTEPVGTTK) are disordered. Residues 172-183 (NNETTEPVGTTK) show a composition bias toward polar residues.

The protein belongs to the MlaD family. In terms of assembly, the complex is composed of two ATP-binding proteins (MlaF), two transmembrane proteins (MlaE), two cytoplasmic solute-binding proteins (MlaB) and six periplasmic solute-binding proteins (MlaD).

It localises to the cell inner membrane. Its function is as follows. Part of the ABC transporter complex MlaFEDB, which is involved in a phospholipid transport pathway that maintains lipid asymmetry in the outer membrane by retrograde trafficking of phospholipids from the outer membrane to the inner membrane. MlaD functions in substrate binding with strong affinity for phospholipids and modulates ATP hydrolytic activity of the complex. This is Intermembrane phospholipid transport system binding protein MlaD from Escherichia coli O157:H7.